The sequence spans 60 residues: Large ribosomal subunit protein uL30 (60 aa).

It belongs to the universal ribosomal protein uL30 family. Part of the 50S ribosomal subunit.

This Symbiobacterium thermophilum (strain DSM 24528 / JCM 14929 / IAM 14863 / T) protein is Large ribosomal subunit protein uL30.